A 73-amino-acid chain; its full sequence is Small ribosomal subunit protein bS18c (73 aa).

Belongs to the bacterial ribosomal protein bS18 family. As to quaternary structure, part of the 30S ribosomal subunit.

The protein resides in the plastid. The protein localises to the chloroplast. In Guillardia theta (Cryptophyte), this protein is Small ribosomal subunit protein bS18c (rps18).